The chain runs to 567 residues: Proline--tRNA ligase (567 aa).

It belongs to the class-II aminoacyl-tRNA synthetase family. ProS type 1 subfamily. As to quaternary structure, homodimer.

It is found in the cytoplasm. It carries out the reaction tRNA(Pro) + L-proline + ATP = L-prolyl-tRNA(Pro) + AMP + diphosphate. In terms of biological role, catalyzes the attachment of proline to tRNA(Pro) in a two-step reaction: proline is first activated by ATP to form Pro-AMP and then transferred to the acceptor end of tRNA(Pro). As ProRS can inadvertently accommodate and process non-cognate amino acids such as alanine and cysteine, to avoid such errors it has two additional distinct editing activities against alanine. One activity is designated as 'pretransfer' editing and involves the tRNA(Pro)-independent hydrolysis of activated Ala-AMP. The other activity is designated 'posttransfer' editing and involves deacylation of mischarged Ala-tRNA(Pro). The misacylated Cys-tRNA(Pro) is not edited by ProRS. This Fusobacterium nucleatum subsp. nucleatum (strain ATCC 25586 / DSM 15643 / BCRC 10681 / CIP 101130 / JCM 8532 / KCTC 2640 / LMG 13131 / VPI 4355) protein is Proline--tRNA ligase.